The sequence spans 625 residues: DNA-directed RNA polymerase subunit gamma (625 aa).

4 residues coordinate Zn(2+): cysteine 71, cysteine 73, cysteine 86, and cysteine 89. 3 residues coordinate Mg(2+): aspartate 467, aspartate 469, and aspartate 471.

This sequence belongs to the RNA polymerase beta' chain family. RpoC1 subfamily. In terms of assembly, in cyanobacteria the RNAP catalytic core is composed of 2 alpha, 1 beta, 1 beta', 1 gamma and 1 omega subunit. When a sigma factor is associated with the core the holoenzyme is formed, which can initiate transcription. Mg(2+) is required as a cofactor. The cofactor is Zn(2+).

The enzyme catalyses RNA(n) + a ribonucleoside 5'-triphosphate = RNA(n+1) + diphosphate. In terms of biological role, DNA-dependent RNA polymerase catalyzes the transcription of DNA into RNA using the four ribonucleoside triphosphates as substrates. The protein is DNA-directed RNA polymerase subunit gamma of Trichormus variabilis (strain ATCC 29413 / PCC 7937) (Anabaena variabilis).